The primary structure comprises 234 residues: Sugar fermentation stimulation protein A (234 aa).

A DNA-binding region (H-T-H motif) is located at residues 201–220 (LLSEAQNKGVEVLAYKAELS).

It belongs to the SfsA family.

Functionally, binds to DNA non-specifically. Could be a regulatory factor involved in maltose metabolism. In Salmonella dublin (strain CT_02021853), this protein is Sugar fermentation stimulation protein A.